Consider the following 288-residue polypeptide: Probable coatomer subunit epsilon (288 aa).

Position 262 is a phosphoserine (S262).

Belongs to the COPE family. In terms of assembly, oligomeric complex that consists of at least the alpha, beta, beta', gamma, delta, epsilon and zeta subunits.

It is found in the cytoplasm. The protein localises to the golgi apparatus membrane. Its subcellular location is the cytoplasmic vesicle. It localises to the COPI-coated vesicle membrane. In terms of biological role, the coatomer is a cytosolic protein complex that binds to dilysine motifs and reversibly associates with Golgi non-clathrin-coated vesicles, which further mediate biosynthetic protein transport from the ER, via the Golgi up to the trans Golgi network. The coatomer complex is required for budding from Golgi membranes, and is essential for the retrograde Golgi-to-ER transport of dilysine-tagged proteins. The protein is Probable coatomer subunit epsilon (sec28) of Schizosaccharomyces pombe (strain 972 / ATCC 24843) (Fission yeast).